Consider the following 121-residue polypeptide: Large ribosomal subunit protein bL20 (121 aa).

The protein belongs to the bacterial ribosomal protein bL20 family.

Its function is as follows. Binds directly to 23S ribosomal RNA and is necessary for the in vitro assembly process of the 50S ribosomal subunit. It is not involved in the protein synthesizing functions of that subunit. The polypeptide is Large ribosomal subunit protein bL20 (Methylorubrum extorquens (strain PA1) (Methylobacterium extorquens)).